A 34-amino-acid chain; its full sequence is Crassicorin-II (34 aa).

Cysteine 6 and cysteine 30 are disulfide-bonded.

In terms of tissue distribution, highly expressed by the mesenteries. Moderately expressed by the pharynx. Weakly expressed by the gonad and pedal disk. No expression in tentacle.

It is found in the secreted. It localises to the nematocyst. In terms of biological role, peptide with both antimicrobial and neurotoxin activities. Cationic AMP with antimicrobial activity against both Gram-positive bacteria (B.subtilis) and Gram-negative bacteria (E.coli and S.enterica). Shows no significant antimicrobial activity against bacteria S.aureus and P.aeruginosa, as well as the fungus C.albicans. In vivo, induces reversible paralytic activity towards the shrimp P.paucidens. May act by impairing sodium or potassium channels in the prey. The protein is Crassicorin-II of Urticina crassicornis (Mottled anemone).